The primary structure comprises 362 residues: 3-isopropylmalate dehydrogenase (362 aa).

Gly-77–Glu-88 lines the NAD(+) pocket. Positions 95, 105, 134, and 223 each coordinate substrate. 3 residues coordinate Mg(2+): Asp-223, Asp-248, and Asp-252. Gly-287–Asn-298 provides a ligand contact to NAD(+).

It belongs to the isocitrate and isopropylmalate dehydrogenases family. As to quaternary structure, homodimer. The cofactor is Mg(2+). It depends on Mn(2+) as a cofactor.

Its subcellular location is the cytoplasm. It catalyses the reaction (2R,3S)-3-isopropylmalate + NAD(+) = 4-methyl-2-oxopentanoate + CO2 + NADH. The protein operates within amino-acid biosynthesis; L-leucine biosynthesis; L-leucine from 3-methyl-2-oxobutanoate: step 3/4. Catalyzes the oxidation of 3-carboxy-2-hydroxy-4-methylpentanoate (3-isopropylmalate) to 3-carboxy-4-methyl-2-oxopentanoate. The product decarboxylates to 4-methyl-2 oxopentanoate. In Zygosaccharomyces rouxii (strain ATCC 2623 / CBS 732 / NBRC 1130 / NCYC 568 / NRRL Y-229), this protein is 3-isopropylmalate dehydrogenase (LEU2).